The chain runs to 729 residues: Fatty acid oxidation complex subunit alpha (729 aa).

The enoyl-CoA hydratase/isomerase stretch occupies residues 1–189; it reads MLYKGDTLYL…KIGLVDGVVA (189 aa). Aspartate 296 is a substrate binding site. The 3-hydroxyacyl-CoA dehydrogenase stretch occupies residues 311–729; the sequence is ETPKHAAVLG…ARPVGALKTA (419 aa). Residues methionine 324, aspartate 343, 400–402, lysine 407, and serine 429 contribute to the NAD(+) site; that span reads VVE. The For 3-hydroxyacyl-CoA dehydrogenase activity role is filled by histidine 450. Position 453 (asparagine 453) interacts with NAD(+). Positions 500 and 660 each coordinate substrate.

In the N-terminal section; belongs to the enoyl-CoA hydratase/isomerase family. It in the C-terminal section; belongs to the 3-hydroxyacyl-CoA dehydrogenase family. Heterotetramer of two alpha chains (FadB) and two beta chains (FadA).

It carries out the reaction a (3S)-3-hydroxyacyl-CoA + NAD(+) = a 3-oxoacyl-CoA + NADH + H(+). It catalyses the reaction a (3S)-3-hydroxyacyl-CoA = a (2E)-enoyl-CoA + H2O. The enzyme catalyses a 4-saturated-(3S)-3-hydroxyacyl-CoA = a (3E)-enoyl-CoA + H2O. The catalysed reaction is (3S)-3-hydroxybutanoyl-CoA = (3R)-3-hydroxybutanoyl-CoA. It carries out the reaction a (3Z)-enoyl-CoA = a 4-saturated (2E)-enoyl-CoA. It catalyses the reaction a (3E)-enoyl-CoA = a 4-saturated (2E)-enoyl-CoA. Its pathway is lipid metabolism; fatty acid beta-oxidation. In terms of biological role, involved in the aerobic and anaerobic degradation of long-chain fatty acids via beta-oxidation cycle. Catalyzes the formation of 3-oxoacyl-CoA from enoyl-CoA via L-3-hydroxyacyl-CoA. It can also use D-3-hydroxyacyl-CoA and cis-3-enoyl-CoA as substrate. The chain is Fatty acid oxidation complex subunit alpha from Klebsiella pneumoniae subsp. pneumoniae (strain ATCC 700721 / MGH 78578).